The sequence spans 256 residues: DNA polymerase sliding clamp 2 (256 aa).

The protein belongs to the PCNA family. As to quaternary structure, homotrimer. The subunits circularize to form a toroid; DNA passes through its center. Replication factor C (RFC) is required to load the toroid on the DNA.

Functionally, sliding clamp subunit that acts as a moving platform for DNA processing. Responsible for tethering the catalytic subunit of DNA polymerase and other proteins to DNA during high-speed replication. This is DNA polymerase sliding clamp 2 from Pyrobaculum aerophilum (strain ATCC 51768 / DSM 7523 / JCM 9630 / CIP 104966 / NBRC 100827 / IM2).